We begin with the raw amino-acid sequence, 116 residues long: Large ribosomal subunit protein bL19 (116 aa).

Belongs to the bacterial ribosomal protein bL19 family.

This protein is located at the 30S-50S ribosomal subunit interface and may play a role in the structure and function of the aminoacyl-tRNA binding site. In Clostridium beijerinckii (strain ATCC 51743 / NCIMB 8052) (Clostridium acetobutylicum), this protein is Large ribosomal subunit protein bL19.